The chain runs to 132 residues: Small ribosomal subunit protein uS8 (132 aa).

It belongs to the universal ribosomal protein uS8 family. As to quaternary structure, part of the 30S ribosomal subunit. Contacts proteins S5 and S12.

Its function is as follows. One of the primary rRNA binding proteins, it binds directly to 16S rRNA central domain where it helps coordinate assembly of the platform of the 30S subunit. The sequence is that of Small ribosomal subunit protein uS8 from Bacillus anthracis (strain A0248).